The chain runs to 331 residues: Probable serine hydrolase (331 aa).

Positions 1-28 are disordered; sequence MGQTRVAATTAAQSPAAELSPETNGQTE. The span at 7 to 17 shows a compositional bias: low complexity; the sequence is AATTAAQSPAA. The AB hydrolase-1 domain maps to 63–163; sequence PIIALHGWQD…EVEKLINIDI (101 aa). Residue Ser138 is part of the active site.

Belongs to the AB hydrolase superfamily. Ubiquitously expressed before embryonic stage 11. At stage 11, expression is concentrated in the foregut and posterior midgut. By stage 15, in gastric caeca, pharynx, posterior spiracles and anterior edge of midgut. At the end of embryogenesis, expression is confined to gastric caeca. During third instar larvae, expressed at low levels in gastric caeca, midgut and hindgut and high level in fat body.

May have a role in detoxification and digestion during embryogenesis and larval development. The polypeptide is Probable serine hydrolase (kraken) (Drosophila melanogaster (Fruit fly)).